Here is an 873-residue protein sequence, read N- to C-terminus: Sister chromatid cohesion protein PDS5 homolog C (873 aa).

4 HEAT repeats span residues 53–92 (NALT…ITAP), 99–136 (DQMK…VAKV), 149–187 (ALLI…ESED), and 189–227 (PSEM…KLKT). Basic and acidic residues predominate over residues 266 to 301 (NEKEDSQGHIKRETEVEKAAEISTPERTDAPKDESG). 2 disordered regions span residues 266–611 (NEKE…LVGS) and 658–873 (SPLD…KRKR). At Thr-289 the chain carries Phosphothreonine. Residues 303-319 (SGVSNGVAQQNDSSVDT) are compositionally biased toward polar residues. Basic and acidic residues predominate over residues 320-334 (DSMKKQDDTGAKDEP). Residues 336 to 348 (QLDNPRNTDLNNT) show a composition bias toward polar residues. 2 stretches are compositionally biased toward basic and acidic residues: residues 349–365 (TEEK…KENE) and 373–394 (DLSK…DSKD). 2 stretches are compositionally biased toward polar residues: residues 400–411 (PVDSSVTAATSS) and 418–438 (SVQI…SSPS). A compositionally biased stretch (basic and acidic residues) spans 456–466 (KKKESSTEEVK). Residues 494–510 (KVASSSKTKPTVPPSKK) show a composition bias toward low complexity. Composition is skewed to basic and acidic residues over residues 511–526 (STSE…KKVV) and 535–555 (TKPK…EESL). Acidic residues predominate over residues 661 to 681 (DESELSQDEEAADQTGQEEDA). Residues 701–725 (SSAKKGSGAGSSKAKATPASKSSKT) show a composition bias toward low complexity. The span at 726–746 (SQDDKTASKSKDSKEASREEE) shows a compositional bias: basic and acidic residues. Over residues 747 to 757 (ASSEEESEEEE) the composition is skewed to acidic residues. Composition is skewed to low complexity over residues 795 to 814 (KATT…PAKS) and 822 to 831 (KSGSASTPAS). The span at 844-853 (ETPKEPEPAT) shows a compositional bias: basic and acidic residues. A compositionally biased stretch (low complexity) spans 854 to 866 (KAKSGKSQGSQSK).

This sequence belongs to the PDS5 family. In terms of assembly, interacts with the cohesin complex.

It localises to the nucleus. Its function is as follows. Cohesin cofactor dispensable during the meiotic division but playing an important role in DNA repair by homologous recombination (HR) probably by helping SMC5/SMC6 complex. Regulator of sister chromatid cohesion in mitosis which may stabilize cohesin complex association with chromatin. May couple sister chromatid cohesion during mitosis to DNA replication. Cohesion ensures that chromosome partitioning is accurate in both meiotic and mitotic cells and plays an important role in DNA repair. This Arabidopsis thaliana (Mouse-ear cress) protein is Sister chromatid cohesion protein PDS5 homolog C.